The following is a 228-amino-acid chain: Ankyrin repeat domain-containing protein 46 (228 aa).

ANK repeat units lie at residues 11–40 (QTNVPLLQACIDGDFTYSKRLLESGFDPNI), 44–74 (RGRTGLHLAAARGNVDICQLLHKFGADPLAT), 77–103 (QGNTALHLCGHVDTIQFLVSNGLKIDI), and 107–138 (QGATPLVLAKRRGVNKDVIRLLESLEEQEVKG). The chain crosses the membrane as a helical span at residues 195-215 (VLLLILVIALLSLGIAYYVSG).

Its subcellular location is the membrane. This is Ankyrin repeat domain-containing protein 46 (Ankrd46) from Mus musculus (Mouse).